Here is a 237-residue protein sequence, read N- to C-terminus: Orotidine 5'-phosphate decarboxylase (237 aa).

Substrate is bound by residues Asp-11, Lys-34, 61 to 70 (DLKLHDIPNT), Thr-123, Arg-185, Gln-194, Gly-214, and Arg-215. The Proton donor role is filled by Lys-63.

It belongs to the OMP decarboxylase family. Type 1 subfamily. In terms of assembly, homodimer.

It catalyses the reaction orotidine 5'-phosphate + H(+) = UMP + CO2. Its pathway is pyrimidine metabolism; UMP biosynthesis via de novo pathway; UMP from orotate: step 2/2. Catalyzes the decarboxylation of orotidine 5'-monophosphate (OMP) to uridine 5'-monophosphate (UMP). This chain is Orotidine 5'-phosphate decarboxylase, found in Ligilactobacillus salivarius (strain UCC118) (Lactobacillus salivarius).